A 206-amino-acid polypeptide reads, in one-letter code: Probable GTP-binding protein EngB (206 aa).

Residues 29-201 (ILPEVAVVGR…MIMIQDALND (173 aa)) enclose the EngB-type G domain. GTP contacts are provided by residues 37–44 (GRSNVGKS), 64–68 (GKTQA), 82–85 (DLPG), 149–152 (TKID), and 180–182 (YSV). Mg(2+) is bound by residues S44 and T66.

Belongs to the TRAFAC class TrmE-Era-EngA-EngB-Septin-like GTPase superfamily. EngB GTPase family. The cofactor is Mg(2+).

In terms of biological role, necessary for normal cell division and for the maintenance of normal septation. This is Probable GTP-binding protein EngB from Protochlamydia amoebophila (strain UWE25).